Consider the following 1063-residue polypeptide: Structural polyprotein (1063 aa).

The interval 1-131 (MASTTPITME…LGPPTNPFQA (131 aa)) is disordered. The human C1QBP/SF2P32-binding stretch occupies residues 30–69 (GASQSRRPRPPRQRDSSTSGDDSGRDSGGPRRRRGNRGRG). At Ser46 the chain carries Phosphoserine; by host. The span at 59–69 (PRRRRGNRGRG) shows a compositional bias: basic residues. The span at 93-107 (APKPSRAPPQQPQPP) shows a compositional bias: pro residues. Cys153 and Cys197 are oxidised to a cystine. The tract at residues 279 to 300 (GAPQAFLAGLLLAAVAVGTARA) is functions as E2 signal peptide. The Extracellular segment spans residues 301-534 (GLQPRADMAA…LWLATANALS (234 aa)). The disordered stretch occupies residues 305 to 347 (RADMAAPPAPPQPPCAHGQHYGHHHHQLPFLGHDGHHGGTLRV). Residues Asn353, Asn371, Asn410, and Asn429 are each glycosylated (N-linked (GlcNAc...) asparagine; by host). Residues 535–555 (LDHALAAFVLLFPWVLIFMVC) traverse the membrane as a helical segment. Topologically, residues 556–582 (RRACRRRGAAAALTAVVLQGYNPPAYG) are cytoplasmic. The segment at 563 to 582 (GAAAALTAVVLQGYNPPAYG) is functions as E1 signal peptide. Topologically, residues 583–1028 (EEAFTYLCTA…QTWAEWAAAH (446 aa)) are extracellular. Disulfide bonds link Cys590–Cys595, Cys619–Cys824, Cys641–Cys653, Cys699–Cys712, Cys758–Cys767, Cys807–Cys817, Cys931–Cys934, and Cys950–Cys983. N-linked (GlcNAc...) asparagine; by host glycosylation is present at Asn658. Residues Asn670 and Ala671 each coordinate Ca(2+). 2 residues coordinate Ca(2+): Asp718 and Thr719. 2 N-linked (GlcNAc...) asparagine; by host glycosylation sites follow: Asn759 and Asn791. Thr1011 and Thr1012 each carry an O-linked (GalNAc...) threonine; by host glycan. A helical membrane pass occupies residues 1029–1049 (WWQLTLGAVCALLLAGLLACC). The Extracellular portion of the chain corresponds to 1050–1063 (AKCLYYLRGAIAPR).

As to quaternary structure, homodimer; further assembles into homooligomer. Interacts with human C1QBP. Interacts (via N-terminus) with protease/methyltransferase p150. In terms of assembly, heterodimer with spike glycoprotein E2. Heterodimer with spike glycoprotein E1. In terms of processing, structural polyprotein: Specific enzymatic cleavages in vivo yield mature proteins. Two signal peptidase-mediated cleavages within the polyprotein produce the structural proteins capsid, E2, and E1. The E2 signal peptide remains attached to the C-terminus of the capsid protein after cleavage by the signal peptidase. Another signal peptide at E2 C-terminus directs E1 to the ER, with a similar mechanism. Post-translationally, contains three N-linked oligosaccharides. Capsid is phosphorylated on Ser-46 by host. This phosphorylation negatively regulates capsid protein RNA-binding activity. Dephosphorylated by human PP1A.

It localises to the virion. Its subcellular location is the host cytoplasm. The protein localises to the host mitochondrion. The protein resides in the virion membrane. It is found in the host Golgi apparatus membrane. Its function is as follows. Capsid protein interacts with genomic RNA and assembles into icosahedric core particles 65-70 nm in diameter. The resulting nucleocapsid eventually associates with the cytoplasmic domain of E2 at the cell membrane, leading to budding and formation of mature virions from host Golgi membranes. Phosphorylation negatively regulates RNA-binding activity, possibly delaying virion assembly during the viral replication phase. Capsid protein dimerizes and becomes disulfide-linked in the virion. Modulates genomic RNA replication. Modulates subgenomic RNA synthesis by interacting with human C1QBP/SF2P32. Induces both perinuclear clustering of mitochondria and the formation of electron-dense intermitochondrial plaques, both hallmarks of rubella virus infected cells. Induces apoptosis when expressed in transfected cells. Responsible for viral attachment to target host cell, by binding to the cell receptor. Its transport to the plasma membrane depends on interaction with E1 protein. The surface glycoproteins display an irregular helical organization and a pseudo-tetrameric inner nucleocapsid arrangement. In terms of biological role, class II viral fusion protein. Fusion activity is inactive as long as E1 is bound to E2 in mature virion. After virus attachment to target cell and clathrin-mediated endocytosis, acidification of the endosome would induce dissociation of E1/E2 heterodimer and concomitant trimerization of the E1 subunits. This E1 homotrimer is fusion active, and promotes release of viral nucleocapsid in cytoplasm after endosome and viral membrane fusion. The cytoplasmic tail of spike glycoprotein E1 modulates virus release. The surface glycoproteins display an irregular helical organization and a pseudo-tetrameric inner nucleocapsid arrangement. This is Structural polyprotein from Rubella virus (strain RN-UK86) (RUBV).